A 398-amino-acid chain; its full sequence is F-box/kelch-repeat protein At1g30090 (398 aa).

Residues 51-98 (EPLIPGLPDDVALNCLLRVPVQSHVSSKSVCKRWHLLFGTKETFFAKR) enclose the F-box domain. Kelch repeat units follow at residues 106–152 (PWLF…FRSV), 159–207 (TMFV…VIDG), 209–255 (IYAA…VLNG), 257–304 (LLVT…IYDR), and 305–346 (LFIV…AVNC).

This chain is F-box/kelch-repeat protein At1g30090, found in Arabidopsis thaliana (Mouse-ear cress).